The primary structure comprises 118 residues: Large ribosomal subunit protein bL20 (118 aa).

It belongs to the bacterial ribosomal protein bL20 family.

Its function is as follows. Binds directly to 23S ribosomal RNA and is necessary for the in vitro assembly process of the 50S ribosomal subunit. It is not involved in the protein synthesizing functions of that subunit. This Sodalis glossinidius (strain morsitans) protein is Large ribosomal subunit protein bL20.